The primary structure comprises 336 residues: 3-hydroxyisobutyrate dehydrogenase, mitochondrial (336 aa).

The transit peptide at 1–36 directs the protein to the mitochondrion; it reads MAASLRLLGAASGLRYWSRRLRPAAGSFAAVCSRSV. Position 40 to 68 (40 to 68) interacts with NAD(+); sequence TPVGFIGLGNMGNPMAKNLMKHGYPLIIY. N6-acetyllysine; alternate is present on residues Lys-60 and Lys-76. N6-succinyllysine; alternate occurs at positions 60 and 76. N6-succinyllysine is present on Lys-95. NAD(+) contacts are provided by residues 103 to 104 and Asn-108; that span reads LP. Lys-121 is modified (N6-acetyllysine). An NAD(+)-binding site is contributed by Thr-134. Lys-141 carries the N6-succinyllysine modification. N6-acetyllysine is present on Lys-145. Lys-149 carries the post-translational modification N6-acetyllysine; alternate. Lys-149 carries the post-translational modification N6-succinyllysine; alternate. Lys-209 is an active-site residue. Residues Lys-238 and Lys-242 each carry the N6-acetyllysine; alternate modification. Lys-238 and Lys-242 each carry N6-succinyllysine; alternate. Residue Lys-284 participates in NAD(+) binding. Lys-297 is modified (N6-succinyllysine). Residue Lys-321 is modified to N6-acetyllysine; alternate. An N6-succinyllysine; alternate modification is found at Lys-321.

Belongs to the HIBADH-related family. 3-hydroxyisobutyrate dehydrogenase subfamily. As to quaternary structure, homodimer. As to expression, detected in skin fibroblasts.

It localises to the mitochondrion. It carries out the reaction 3-hydroxy-2-methylpropanoate + NAD(+) = 2-methyl-3-oxopropanoate + NADH + H(+). Its pathway is amino-acid degradation; L-valine degradation. This is 3-hydroxyisobutyrate dehydrogenase, mitochondrial (HIBADH) from Homo sapiens (Human).